The primary structure comprises 101 residues: MITLGHMLALGAVLFAISLAGIFLNRKNVIVLLMSIELMLLSVNINFVGFSRQLGDPSGQLFVFFILTVAAAEAAIGLAILVTLFRTRRTINVGEVDSLKG.

3 helical membrane passes run 4–24 (LGHM…GIFL), 30–50 (IVLL…FVGF), and 62–82 (FVFF…AILV).

Belongs to the complex I subunit 4L family. NDH-1 is composed of 14 different subunits. Subunits NuoA, H, J, K, L, M, N constitute the membrane sector of the complex.

It localises to the cell inner membrane. The catalysed reaction is a quinone + NADH + 5 H(+)(in) = a quinol + NAD(+) + 4 H(+)(out). Functionally, NDH-1 shuttles electrons from NADH, via FMN and iron-sulfur (Fe-S) centers, to quinones in the respiratory chain. The immediate electron acceptor for the enzyme in this species is believed to be ubiquinone. Couples the redox reaction to proton translocation (for every two electrons transferred, four hydrogen ions are translocated across the cytoplasmic membrane), and thus conserves the redox energy in a proton gradient. The protein is NADH-quinone oxidoreductase subunit K of Stenotrophomonas maltophilia (strain K279a).